We begin with the raw amino-acid sequence, 45 residues long: Natriuretic peptide OsNP-d (45 aa).

The propeptide occupies 1–5; the sequence is PAAGL. Cys-14 and Cys-30 are oxidised to a cystine.

This sequence belongs to the natriuretic peptide family. In terms of tissue distribution, expressed by the venom gland.

The protein localises to the secreted. Its function is as follows. Snake venom natriuretic peptide that targets both NPR1 and NPR2. Exhibits hypotensive and vasodepressor activities. This Oxyuranus scutellatus scutellatus (Australian taipan) protein is Natriuretic peptide OsNP-d.